The primary structure comprises 295 residues: Tyrosine recombinase XerD (295 aa).

The region spanning 1–85 is the Core-binding (CB) domain; the sequence is METIIEEYLK…TIRSFHQFAL (85 aa). The Tyr recombinase domain maps to 106–289; it reads KLPDVLDVEE…SKTQIRQMYN (184 aa). Catalysis depends on residues Arg-146, Lys-170, His-241, Arg-244, and His-267. The active-site O-(3'-phospho-DNA)-tyrosine intermediate is the Tyr-276.

It belongs to the 'phage' integrase family. XerD subfamily. As to quaternary structure, forms a cyclic heterotetrameric complex composed of two molecules of XerC and two molecules of XerD.

The protein localises to the cytoplasm. Its function is as follows. Site-specific tyrosine recombinase, which acts by catalyzing the cutting and rejoining of the recombining DNA molecules. The XerC-XerD complex is essential to convert dimers of the bacterial chromosome into monomers to permit their segregation at cell division. It also contributes to the segregational stability of plasmids. In Staphylococcus haemolyticus (strain JCSC1435), this protein is Tyrosine recombinase XerD.